The following is a 386-amino-acid chain: Indole-3-acetate O-methyltransferase 1 (386 aa).

Tyr30 is an S-adenosyl-L-methionine binding site. Substrate-binding positions include Tyr30 and 33–37 (NSQAQ). Residues Gly72, 72–73 (GC), Asn78, 108–111 (FSDL), Asp110, 152–154 (SFY), and 169–171 (AFS) each bind S-adenosyl-L-methionine. Residue 170–174 (FSLHW) coordinates substrate. Mg(2+)-binding residues include Asn191, Val195, Arg277, Asp278, Phe280, and Asn281. Ser334 provides a ligand contact to substrate.

Belongs to the methyltransferase superfamily. SABATH family. In terms of assembly, homodimer. The cofactor is Mg(2+). As to expression, expressed in seedling roots and leaves. Expressed in the stigma, funiculus, and vascular bundles in sepals, petals and stamens.

The catalysed reaction is (indol-3-yl)acetate + S-adenosyl-L-methionine = methyl (indol-3-yl)acetate + S-adenosyl-L-homocysteine. In terms of biological role, catalyzes the methylation of the free carboxyl end of the plant hormone indole-3-acetic acid (IAA). Converts IAA to IAA methyl ester (MeIAA). Regulates IAA activities by IAA methylation. Methylation of IAA plays an important role in regulating plant development and auxin homeostasis. Required for correct leaf pattern formation. MeIAA seems to be an inactive form of IAA. This is Indole-3-acetate O-methyltransferase 1 (IAMT1) from Arabidopsis thaliana (Mouse-ear cress).